The following is a 416-amino-acid chain: Squalene synthase (416 aa).

NADP(+) contacts are provided by arginine 52 and arginine 77. Aspartate 80, glutamate 83, and aspartate 84 together coordinate Mg(2+). Arginine 218 is an NADP(+) binding site. Residues 284-304 (SVFNFCAIPQVMAIATLAACY) traverse the membrane as a helical segment. Lysine 315 and arginine 317 together coordinate NADP(+). A helical transmembrane segment spans residues 384-404 (PIYLSFIMLLAALSWQYLSTL).

It belongs to the phytoene/squalene synthase family. The cofactor is Mg(2+).

The protein resides in the endoplasmic reticulum membrane. It catalyses the reaction 2 (2E,6E)-farnesyl diphosphate + NADPH + H(+) = squalene + 2 diphosphate + NADP(+). The enzyme catalyses 2 (2E,6E)-farnesyl diphosphate + NADH + H(+) = squalene + 2 diphosphate + NAD(+). It carries out the reaction presqualene diphosphate + NADH + H(+) = squalene + diphosphate + NAD(+). The catalysed reaction is presqualene diphosphate + NADPH + H(+) = squalene + diphosphate + NADP(+). It catalyses the reaction 2 (2E,6E)-farnesyl diphosphate = presqualene diphosphate + diphosphate. It participates in terpene metabolism; lanosterol biosynthesis; lanosterol from farnesyl diphosphate: step 1/3. Catalyzes the condensation of 2 farnesyl pyrophosphate (FPP) moieties to form squalene. Proceeds in two distinct steps. In the first half-reaction, two molecules of FPP react to form the stable presqualene diphosphate intermediate (PSQPP), with concomitant release of a proton and a molecule of inorganic diphosphate. In the second half-reaction, PSQPP undergoes heterolysis, isomerization, and reduction with NADPH or NADH to form squalene. It is the first committed enzyme of the sterol biosynthesis pathway. This is Squalene synthase (Fdft1) from Mus musculus (Mouse).